The primary structure comprises 2313 residues: Voltage-dependent R-type calcium channel subunit alpha-1E (2313 aa).

Residues 1 to 38 (MARFGEAVVARPGSGDGDSDQSRNRQGTPVPASGQAAA) are disordered. At 1-89 (MARFGEAVVA…KYAKKLIDWP (89 aa)) the chain is on the cytoplasmic side. Phosphoserine is present on residues Ser-14 and Ser-19. Residues 76-354 (NIVRKYAKKL…LVLGVLSGEF (279 aa)) form an I repeat. The chain crosses the membrane as a helical span at residues 90 to 108 (PFEYMILATIIANCIVLAL). Residues 109-127 (EQHLPEDDKTPMSRRLEKT) are Extracellular-facing. A helical transmembrane segment spans residues 128–146 (EPYFIGIFCFEAGIKIVAL). The Cytoplasmic segment spans residues 147-158 (GFIFHKGSYLRN). The helical transmembrane segment at 159–173 (GWNVMDFIVVLSGIL) threads the bilayer. At 174–185 (ATAGTHFNTHVD) the chain is on the extracellular side. The helical transmembrane segment at 186–205 (LRTLRAVRVLRPLKLVSGIP) threads the bilayer. Topologically, residues 206-223 (SLQIVLKSIMKAMVPLLQ) are cytoplasmic. The chain crosses the membrane as a helical span at residues 224–244 (IGLLLFFAILMFAIIGLEFYS). Topologically, residues 245-326 (GKLHRACFMN…NTNDALGATW (82 aa)) are extracellular. N-linked (GlcNAc...) asparagine glycosylation occurs at Asn-254. A helical transmembrane segment spans residues 327-350 (NWLYFIPLIIIGSFFVLNLVLGVL). At 351 to 476 (SGEFAKERER…ISIRHMVKSQ (126 aa)) the chain is on the cytoplasmic side. A binding to the beta subunit region spans residues 374–391 (QQIERELNGYRAWIDKAE). Asp-426 lines the Ca(2+) pocket. Ser-427 carries the post-translational modification Phosphoserine. Ca(2+)-binding residues include Ser-428, Glu-430, and Cys-432. Thr-440 is subject to Phosphothreonine. The II repeat unit spans residues 462-706 (ERLLRISIRH…VFLAIAVDNL (245 aa)). A helical transmembrane segment spans residues 477–496 (VFYWIVLSLVALNTACVAIV). Over 497 to 509 (HHNQPQWLTHLLY) the chain is Extracellular. Residues 510-529 (YAEFLFLGLFLLEMSLKMYG) traverse the membrane as a helical segment. Over 530–538 (MGPRLYFHS) the chain is Cytoplasmic. Residues 539-557 (SFNCFDFGVTVGSIFEVVW) traverse the membrane as a helical segment. Residues 558-567 (AIFRPGTSFG) are Extracellular-facing. Residues 568–586 (ISVLRALRLLRIFKITKYW) form a helical membrane-spanning segment. Over 587 to 605 (ASLRNLVVSLMSSMKSIIS) the chain is Cytoplasmic. The helical transmembrane segment at 606–625 (LLFLLFLFIVVFALLGMQLF) threads the bilayer. The Extracellular portion of the chain corresponds to 626–678 (GGRFNFNDGTPSANFDTFPAAIMTVFQILTGEDWNEVMYNGIRSQGGVSSGMW). A helical transmembrane segment spans residues 679–703 (SAIYFIVLTLFGNYTLLNVFLAIAV). Residues 704-1148 (DNLANAQELT…TNPIRRACHY (445 aa)) are Cytoplasmic-facing. The disordered stretch occupies residues 729 to 774 (LQKAKEVSPMSAPNMPSIERDRRRRHHMSMWEPRSSHLRERRRRHH). A phosphoserine mark is found at Ser-736, Ser-745, Ser-793, Ser-815, and Ser-855. The disordered stretch occupies residues 851–984 (SRGGSLKGDG…EERAQDLRRT (134 aa)). The segment covering 866 to 875 (ALDNQRTPLS) has biased composition (polar residues). Positions 913–926 (RHRQSQRRSRHRRV) are enriched in basic residues. Positions 933 to 945 (SSSASRSRSASQE) are enriched in low complexity. Phosphoserine is present on Ser-947. Positions 955-983 (EGEKDHELRGNHGAKEPTIQEERAQDLRR) are enriched in basic and acidic residues. Residue Ser-1097 is modified to Phosphoserine. The segment at 1103–1125 (EIREDEEEVEKKKQKKEKRETGK) is disordered. Residues 1140-1426 (NPIRRACHYI…IFVALIIITF (287 aa)) form an III repeat. The helical transmembrane segment at 1149-1165 (IVNLRYFEMCILLVIAA) threads the bilayer. Over 1166 to 1189 (SSIALAAEDPVLTNSERNKVLRYF) the chain is Extracellular. A helical membrane pass occupies residues 1190–1209 (DYVFTGVFTFEMVIKMIDQG). Residues 1210–1217 (LILQDGSY) lie on the Cytoplasmic side of the membrane. Residues 1218-1240 (FRDLWNILDFVVVVGALVAFALA) form a helical membrane-spanning segment. Topologically, residues 1241 to 1254 (NALGTNKGRDIKTI) are extracellular. Residues 1255–1272 (KSLRVLRVLRPLKTIKRL) form a helical membrane-spanning segment. At 1273–1291 (PKLKAVFDCVVTSLKNVFN) the chain is on the cytoplasmic side. Residues 1292-1311 (ILIVYKLFMFIFAVIAVQLF) form a helical membrane-spanning segment. The Extracellular portion of the chain corresponds to 1312–1398 (KGKFFYCTDS…RGPSRSNRME (87 aa)). A helical membrane pass occupies residues 1399-1422 (MSIFYVVYFVVFPFFFVNIFVALI). Topologically, residues 1423 to 1479 (IITFQEQGDKMMEECSLEKNERACIDFAISAKPLTRYMPQNRHTFQYRVWHFVVSPS) are cytoplasmic. An IV repeat occupies 1463-1726 (NRHTFQYRVW…LFVAVIMDNF (264 aa)). The helical transmembrane segment at 1480–1498 (FEYTIMAMIALNTVVLMMK) threads the bilayer. Over 1499 to 1513 (YYSAPCTYELALKYL) the chain is Extracellular. A helical transmembrane segment spans residues 1514–1533 (NIAFTMVFSLECVLKVIAFG). Over 1534 to 1541 (FLNYFRDT) the chain is Cytoplasmic. The helical transmembrane segment at 1542-1560 (WNIFDFITVIGSITEIILT) threads the bilayer. The Extracellular segment spans residues 1561-1571 (DSKLVNTSGFN). 2 N-linked (GlcNAc...) asparagine glycosylation sites follow: Asn-1566 and Asn-1571. Residues 1572–1590 (MSFLKLFRAARLIKLLRQG) traverse the membrane as a helical segment. The Cytoplasmic segment spans residues 1591 to 1609 (YTIRILLWTFVQSFKALPY). A helical membrane pass occupies residues 1610–1629 (VCLLIAMLFFIYAIIGMQVF). Over 1630-1698 (GNIKLDEESH…NENERCGTDL (69 aa)) the chain is Extracellular. Residues 1699–1724 (AYVYFVSFIFFCSFLMLNLFVAVIMD) form a helical membrane-spanning segment. The Cytoplasmic segment spans residues 1725–2313 (NFEYLTRDSS…LSDTEEDDKC (589 aa)). One can recognise an EF-hand domain in the interval 1739 to 1774 (HHLDEFVRVWAEYDRAACGRIHYTEMYEMLTLMSPP). 3 residues coordinate Ca(2+): Asp-1752, Arg-1758, and Glu-1763. Disordered regions lie at residues 1970-2170 (VSEL…RPLL), 2206-2225 (CLTESSNSPHPQQSQHASPQ), and 2263-2295 (SNTIGSAPPLRHSWQMPNGHYRRRRRGGPGPGM). Over residues 2012-2023 (TDPSSMRRSFST) the composition is skewed to polar residues. Positions 2055–2064 (HSSLRLSAHR) are enriched in low complexity. A compositionally biased stretch (basic and acidic residues) spans 2065–2085 (LNSDSGHKSDTHRSGGRERGR). Residues Ser-2094 and Ser-2113 each carry the phosphoserine modification. Residues 2101-2118 (NSEERGTQADWESPERRQ) show a composition bias toward basic and acidic residues. Positions 2129–2152 (TPNRQGTGSLSESSIPSVSDTSTP) are enriched in polar residues. The span at 2210 to 2225 (SSNSPHPQQSQHASPQ) shows a compositional bias: low complexity.

It belongs to the calcium channel alpha-1 subunit (TC 1.A.1.11) family. CACNA1E subfamily. In terms of assembly, interacts with EFHC1. Voltage-dependent calcium channels are multisubunit complexes, consisting of alpha-1, alpha-2, beta and delta subunits in a 1:1:1:1 ratio. The channel activity is directed by the pore-forming and voltage-sensitive alpha-1 subunit. In many cases, this subunit is sufficient to generate voltage-sensitive calcium channel activity. The auxiliary subunits beta and alpha-2/delta linked by a disulfide bridge regulate the channel activity. Expressed in neuronal tissues and in kidney.

Its subcellular location is the membrane. The enzyme catalyses Ca(2+)(in) = Ca(2+)(out). Voltage-sensitive calcium channels (VSCC) mediate the entry of calcium ions into excitable cells. They are also involved in a variety of calcium-dependent processes, including muscle contraction, hormone or neurotransmitter release, gene expression, cell motility, cell division and cell death. The isoform alpha-1E gives rise to R-type calcium currents. R-type calcium channels belong to the 'high-voltage activated' (HVA) group and are blocked by nickel. They are however insensitive to dihydropyridines (DHP). Calcium channels containing alpha-1E subunit could be involved in the modulation of firing patterns of neurons which is important for information processing. Functionally, voltage-sensitive calcium channels (VSCC) mediate the entry of calcium ions into excitable cells. They are also involved in a variety of calcium-dependent processes, including muscle contraction, hormone or neurotransmitter release, gene expression, cell motility, cell division and cell death. The isoform alpha-1E gives rise to R-type calcium currents. This Homo sapiens (Human) protein is Voltage-dependent R-type calcium channel subunit alpha-1E (CACNA1E).